The sequence spans 456 residues: 3-isopropylmalate dehydratase large subunit (456 aa).

The [4Fe-4S] cluster site is built by Cys336, Cys396, and Cys399.

The protein belongs to the aconitase/IPM isomerase family. LeuC type 1 subfamily. In terms of assembly, heterodimer of LeuC and LeuD. It depends on [4Fe-4S] cluster as a cofactor.

The enzyme catalyses (2R,3S)-3-isopropylmalate = (2S)-2-isopropylmalate. It participates in amino-acid biosynthesis; L-leucine biosynthesis; L-leucine from 3-methyl-2-oxobutanoate: step 2/4. In terms of biological role, catalyzes the isomerization between 2-isopropylmalate and 3-isopropylmalate, via the formation of 2-isopropylmaleate. This chain is 3-isopropylmalate dehydratase large subunit, found in Staphylococcus saprophyticus subsp. saprophyticus (strain ATCC 15305 / DSM 20229 / NCIMB 8711 / NCTC 7292 / S-41).